A 171-amino-acid chain; its full sequence is Antimicrobial protein CAP18 (171 aa).

Residues 1–29 (METHKHGPSLAWWSLLLLLLGLLMPPAIA) form the signal peptide. 2 cysteine pairs are disulfide-bonded: cysteine 85-cysteine 96 and cysteine 107-cysteine 124.

This sequence belongs to the cathelicidin family. As to expression, neutrophils.

Its subcellular location is the secreted. CAP18 binds to the lipid A moiety of bacterial lipopolysaccharides (LPS), a glycolipid present in the outer membrane of all Gram-negative bacteria. Has antibiotic activity. This Oryctolagus cuniculus (Rabbit) protein is Antimicrobial protein CAP18 (CAP18).